The chain runs to 224 residues: Cytidylate kinase (224 aa).

11 to 19 (GPAAAGKST) contributes to the ATP binding site.

Belongs to the cytidylate kinase family. Type 1 subfamily.

It is found in the cytoplasm. The catalysed reaction is CMP + ATP = CDP + ADP. The enzyme catalyses dCMP + ATP = dCDP + ADP. This Geobacillus thermodenitrificans (strain NG80-2) protein is Cytidylate kinase.